Consider the following 745-residue polypeptide: Cytoplasmic polyadenylation element-binding protein 3 (745 aa).

3 disordered regions span residues 1-45 (MNLN…KSPT), 94-180 (VGSK…TNNS), and 204-283 (NKAN…FGEL). The span at 162–175 (LNFERDAEQKKDST) shows a compositional bias: basic and acidic residues. Polar residues predominate over residues 219-229 (ETPTDSPQKGF). Over residues 230–240 (SSSTESSPSDS) the composition is skewed to low complexity. The span at 241–255 (MNQFPSREHFTSANE) shows a compositional bias: polar residues. Residues 264–276 (FQQEHGNKNRDSD) show a composition bias toward basic and acidic residues. Residues 297-319 (IFVGGVPWDITEAALKDSFGEFG) enclose the RRM domain.

Functionally, cytoplasmic polyadenylation element binding protein that binds to and regulates the translation of specific mRNAs. May not be required for oogenesis. The polypeptide is Cytoplasmic polyadenylation element-binding protein 3 (cpb-3) (Caenorhabditis elegans).